Reading from the N-terminus, the 78-residue chain is Beta-defensin 29 (78 aa).

An N-terminal signal peptide occupies residues 1–23 (MPVTKSYFMTVVVVLILVDETTG). Intrachain disulfides connect Cys-40–Cys-67, Cys-47–Cys-61, and Cys-51–Cys-68.

Belongs to the beta-defensin family. Highly expressed in the cauda epididymis.

It localises to the secreted. Its function is as follows. Has antibacterial activity. This is Beta-defensin 29 (Defb29) from Mus musculus (Mouse).